We begin with the raw amino-acid sequence, 447 residues long: D-ribitol-5-phosphate cytidylyltransferase (447 aa).

The protein belongs to the IspD/TarI cytidylyltransferase family. IspD subfamily. Homodimer.

The protein localises to the cytoplasm. Its subcellular location is the cytosol. The catalysed reaction is D-ribitol 5-phosphate + CTP + H(+) = CDP-L-ribitol + diphosphate. The enzyme catalyses D-ribose 5-phosphate + CTP + H(+) = CDP-D-ribose + diphosphate. It catalyses the reaction D-ribulose 5-phosphate + CTP + H(+) = CDP-D-ribulose + diphosphate. The protein operates within protein modification; protein glycosylation. In terms of biological role, cytidylyltransferase required for protein O-linked mannosylation. Catalyzes the formation of CDP-ribitol nucleotide sugar from D-ribitol 5-phosphate. CDP-ribitol is a substrate of FKTN during the biosynthesis of the phosphorylated O-mannosyl trisaccharide (N-acetylgalactosamine-beta-3-N-acetylglucosamine-beta-4-(phosphate-6-)mannose), a carbohydrate structure present in alpha-dystroglycan (DAG1), which is required for binding laminin G-like domain-containing extracellular proteins with high affinity. Shows activity toward other pentose phosphate sugars and mediates formation of CDP-ribulose or CDP-ribose using CTP and ribulose-5-phosphate or ribose-5-phosphate, respectively. Not involved in dolichol production. The protein is D-ribitol-5-phosphate cytidylyltransferase (Crppa) of Rattus norvegicus (Rat).